We begin with the raw amino-acid sequence, 326 residues long: Adenosine receptor A1 (326 aa).

Over M1–A10 the chain is Extracellular. The helical transmembrane segment at A11 to A33 threads the bilayer. Over V34–C46 the chain is Cytoplasmic. A helical membrane pass occupies residues F47–I69. Residues N70 to C80 lie on the Extracellular side of the membrane. C80 and C169 are joined by a disulfide. Residues L81–A102 traverse the membrane as a helical segment. Topologically, residues V103–R123 are cytoplasmic. The helical transmembrane segment at A124–W146 threads the bilayer. The Extracellular segment spans residues N147–S176. An N-linked (GlcNAc...) asparagine glycan is attached at N159. A helical membrane pass occupies residues M177–L201. Over E202 to S235 the chain is Cytoplasmic. The helical transmembrane segment at L236–F259 threads the bilayer. Residues C260 to S267 are Extracellular-facing. Residues I268–I292 traverse the membrane as a helical segment. Topologically, residues Q293–D326 are cytoplasmic. C309 carries S-palmitoyl cysteine lipidation.

Belongs to the G-protein coupled receptor 1 family.

The protein resides in the cell membrane. Receptor for adenosine. The activity of this receptor is mediated by G proteins which inhibit adenylyl cyclase. In Canis lupus familiaris (Dog), this protein is Adenosine receptor A1 (ADORA1).